The chain runs to 741 residues: Catalase-peroxidase (741 aa).

The tryptophyl-tyrosyl-methioninium (Trp-Tyr) (with M-234) cross-link spans 86 to 208 (WHSAGSYRIF…FAATEMGLIY (123 aa)). Histidine 87 (proton acceptor) is an active-site residue. Positions 208–234 (YVNPEGPGGNPDPLGSAQEIRVAFRRM) form a cross-link, tryptophyl-tyrosyl-methioninium (Tyr-Met) (with W-86). Position 249 (histidine 249) interacts with heme b.

This sequence belongs to the peroxidase family. Peroxidase/catalase subfamily. Homodimer or homotetramer. The cofactor is heme b. In terms of processing, formation of the three residue Trp-Tyr-Met cross-link is important for the catalase, but not the peroxidase activity of the enzyme.

The catalysed reaction is H2O2 + AH2 = A + 2 H2O. The enzyme catalyses 2 H2O2 = O2 + 2 H2O. Its function is as follows. Bifunctional enzyme with both catalase and broad-spectrum peroxidase activity. Also displays NADH oxidase, INH lyase and isonicotinoyl-NAD synthase activities. The protein is Catalase-peroxidase of Archaeoglobus fulgidus (strain ATCC 49558 / DSM 4304 / JCM 9628 / NBRC 100126 / VC-16).